Here is a 670-residue protein sequence, read N- to C-terminus: tRNA 5-methylaminomethyl-2-thiouridine biosynthesis bifunctional protein MnmC (670 aa).

Residues Met-1–Ile-242 are tRNA (mnm(5)s(2)U34)-methyltransferase. The tract at residues Ile-269–Glu-670 is FAD-dependent cmnm(5)s(2)U34 oxidoreductase.

In the N-terminal section; belongs to the methyltransferase superfamily. tRNA (mnm(5)s(2)U34)-methyltransferase family. This sequence in the C-terminal section; belongs to the DAO family. FAD serves as cofactor.

The protein localises to the cytoplasm. The enzyme catalyses 5-aminomethyl-2-thiouridine(34) in tRNA + S-adenosyl-L-methionine = 5-methylaminomethyl-2-thiouridine(34) in tRNA + S-adenosyl-L-homocysteine + H(+). Its function is as follows. Catalyzes the last two steps in the biosynthesis of 5-methylaminomethyl-2-thiouridine (mnm(5)s(2)U) at the wobble position (U34) in tRNA. Catalyzes the FAD-dependent demodification of cmnm(5)s(2)U34 to nm(5)s(2)U34, followed by the transfer of a methyl group from S-adenosyl-L-methionine to nm(5)s(2)U34, to form mnm(5)s(2)U34. The chain is tRNA 5-methylaminomethyl-2-thiouridine biosynthesis bifunctional protein MnmC from Haemophilus influenzae (strain PittGG).